We begin with the raw amino-acid sequence, 197 residues long: Recombination protein RecR (197 aa).

The C4-type zinc finger occupies 57 to 72 (CSVCFGITEDDPCHLC). The Toprim domain maps to 79–174 (TTICVVEEPQ…RVTRLAHGIP (96 aa)).

The protein belongs to the RecR family.

Its function is as follows. May play a role in DNA repair. It seems to be involved in an RecBC-independent recombinational process of DNA repair. It may act with RecF and RecO. The protein is Recombination protein RecR of Geotalea daltonii (strain DSM 22248 / JCM 15807 / FRC-32) (Geobacter daltonii).